Reading from the N-terminus, the 97-residue chain is Large ribosomal subunit protein uL23 (97 aa).

This sequence belongs to the universal ribosomal protein uL23 family. Part of the 50S ribosomal subunit. Contacts protein L29, and trigger factor when it is bound to the ribosome.

In terms of biological role, one of the early assembly proteins it binds 23S rRNA. One of the proteins that surrounds the polypeptide exit tunnel on the outside of the ribosome. Forms the main docking site for trigger factor binding to the ribosome. This Brucella melitensis biotype 2 (strain ATCC 23457) protein is Large ribosomal subunit protein uL23.